Reading from the N-terminus, the 245-residue chain is 1-(5-phosphoribosyl)-5-[(5-phosphoribosylamino)methylideneamino] imidazole-4-carboxamide isomerase (245 aa).

The active-site Proton acceptor is the Asp-7. Catalysis depends on Asp-129, which acts as the Proton donor.

It belongs to the HisA/HisF family.

Its subcellular location is the cytoplasm. The catalysed reaction is 1-(5-phospho-beta-D-ribosyl)-5-[(5-phospho-beta-D-ribosylamino)methylideneamino]imidazole-4-carboxamide = 5-[(5-phospho-1-deoxy-D-ribulos-1-ylimino)methylamino]-1-(5-phospho-beta-D-ribosyl)imidazole-4-carboxamide. It functions in the pathway amino-acid biosynthesis; L-histidine biosynthesis; L-histidine from 5-phospho-alpha-D-ribose 1-diphosphate: step 4/9. This is 1-(5-phosphoribosyl)-5-[(5-phosphoribosylamino)methylideneamino] imidazole-4-carboxamide isomerase from Cronobacter sakazakii (strain ATCC BAA-894) (Enterobacter sakazakii).